A 1111-amino-acid polypeptide reads, in one-letter code: Protein NETWORKED 1C (1111 aa).

The region spanning 13–93 (YSWWWDSHNT…ERYNHATGVI (81 aa)) is the NAB domain. 3 coiled-coil regions span residues 202–287 (SESE…KESS), 314–605 (ERAS…LISE), and 642–752 (KTIG…LESK). The tract at residues 850 to 870 (TGGGRSMRKQDGGSGRMRKQS) is disordered. A coiled-coil region spans residues 943 to 1009 (NREVNKRRVL…EGEEAIEKLF (67 aa)).

The protein belongs to the NET family.

In terms of biological role, plant-specific actin binding protein. May be part of a membrane-cytoskeletal adapter complex. The polypeptide is Protein NETWORKED 1C (Arabidopsis thaliana (Mouse-ear cress)).